The following is a 558-amino-acid chain: uncharacterized protein (558 aa).

Residues 396 to 420 form a disordered region; that stretch reads SSITDNDTDNDSGATESQQTDSEND. The span at 407–416 shows a compositional bias: polar residues; it reads SGATESQQTD.

The protein belongs to the chlamydial CPn_0065/CT_288/TC_0561 family.

This is an uncharacterized protein from Chlamydia muridarum (strain MoPn / Nigg).